A 337-amino-acid chain; its full sequence is Protein-arginine kinase (337 aa).

The 229-residue stretch at 12 to 240 (IVIASKVKIL…NKLILREKNQ (229 aa)) folds into the Phosphagen kinase C-terminal domain. ATP-binding positions include 15 to 19 (ASKVK), 162 to 166 (RAKVF), and 193 to 198 (KSIYNS).

Belongs to the ATP:guanido phosphotransferase family.

It carries out the reaction L-arginyl-[protein] + ATP = N(omega)-phospho-L-arginyl-[protein] + ADP + H(+). Catalyzes the specific phosphorylation of arginine residues in proteins. The sequence is that of Protein-arginine kinase from Clostridium perfringens (strain ATCC 13124 / DSM 756 / JCM 1290 / NCIMB 6125 / NCTC 8237 / Type A).